The following is a 348-amino-acid chain: Probable UDP-arabinopyranose mutase 5 (348 aa).

Positions D100 to D102 match the DXD motif motif. R148 carries an N-linked (Glc...) arginine glycan.

Belongs to the RGP family. As to quaternary structure, heteromers with RGP1 and RGP2. Mn(2+) is required as a cofactor. Requires Mg(2+) as cofactor. Post-translationally, reversibly glycosylated in vitro by UDP-glucose, UDP-xylose and UDP-galactose, but not UDP-mannose. As to expression, widely expressed at low levels.

It is found in the cytoplasm. The protein resides in the cytosol. The protein localises to the golgi apparatus. It carries out the reaction UDP-beta-L-arabinofuranose = UDP-beta-L-arabinopyranose. Probable UDP-L-arabinose mutase involved in the biosynthesis of cell wall non-cellulosic polysaccharides. The sequence is that of Probable UDP-arabinopyranose mutase 5 from Arabidopsis thaliana (Mouse-ear cress).